We begin with the raw amino-acid sequence, 574 residues long: Septation ring formation regulator EzrA (574 aa).

The Extracellular segment spans residues 1–7 (MSSGIIL). A helical membrane pass occupies residues 8 to 26 (LLVAIVLLVIIAYVVGVVI). At 27-574 (RKRNDTLIAN…YEKTQERIRF (548 aa)) the chain is on the cytoplasmic side. Coiled coils occupy residues 104–141 (VRAKHEIDNVDSQLTIIEEDIVSIREALEVLKEQEEKN), 275–343 (LVSL…SAKY), and 473–525 (DIEA…VQKS).

The protein belongs to the EzrA family.

The protein resides in the cell membrane. In terms of biological role, negative regulator of FtsZ ring formation; modulates the frequency and position of FtsZ ring formation. Inhibits FtsZ ring formation at polar sites. Interacts either with FtsZ or with one of its binding partners to promote depolymerization. This is Septation ring formation regulator EzrA from Streptococcus agalactiae serotype III (strain NEM316).